We begin with the raw amino-acid sequence, 185 residues long: HTH-type transcriptional regulator Hpr (185 aa).

An HTH marR-type domain is found at Ala-13–Gly-157. The H-T-H motif DNA-binding region spans Ile-63 to Glu-86.

Homodimer.

Negative regulator of protease production and sporulation. The protein is HTH-type transcriptional regulator Hpr of Bacillus cereus (strain G9842).